The chain runs to 1356 residues: Probable aldehyde oxidase 3 (1356 aa).

In terms of domain architecture, 2Fe-2S ferredoxin-type spans Arg10–Ile97. Residues Cys49, Cys54, Cys57, and Cys79 each contribute to the [2Fe-2S] cluster site. The region spanning Val245–Arg437 is the FAD-binding PCMH-type domain. A disordered region spans residues Asn552–Ser576.

Belongs to the xanthine dehydrogenase family. As to quaternary structure, aldehyde oxidases (AO) are homodimers and heterodimers of AO subunits. Requires [2Fe-2S] cluster as cofactor. FAD serves as cofactor. Mo-molybdopterin is required as a cofactor.

The catalysed reaction is an aldehyde + O2 + H2O = a carboxylate + H2O2 + H(+). The sequence is that of Probable aldehyde oxidase 3 from Oryza sativa subsp. japonica (Rice).